A 324-amino-acid chain; its full sequence is Aldo-keto reductase family 1 member A1 (324 aa).

At Ser-3 the chain carries Phosphoserine. NADP(+) contacts are provided by residues 10 to 19 (GQKMPLIGLG), Thr-20, and Trp-21. Ser-37 bears the Phosphoserine mark. Residue Asp-44 participates in NADP(+) binding. Tyr-49 functions as the Proton donor in the catalytic mechanism. Lys-126 is modified (N6-acetyllysine; alternate). An N6-succinyllysine; alternate modification is found at Lys-126. Lys-144 carries the post-translational modification N6-succinyllysine. Residues Ser-161, Asn-162, Ser-210, Leu-212, Ser-214, Ser-215, Lys-262, Ser-263, Ile-264, Thr-265, Arg-268, Gln-271, and Asn-272 each contribute to the NADP(+) site. Phosphoserine is present on Ser-210.

This sequence belongs to the aldo/keto reductase family.

The protein resides in the cytoplasm. It localises to the cytosol. Its subcellular location is the apical cell membrane. It carries out the reaction a primary alcohol + NADP(+) = an aldehyde + NADPH + H(+). The enzyme catalyses L-gulonate + NADP(+) = aldehydo-D-glucuronate + NADPH + H(+). It catalyses the reaction L-gulono-1,4-lactone + NADP(+) = D-glucurono-3,6-lactone + NADPH + H(+). The catalysed reaction is allyl alcohol + NADP(+) = acrolein + NADPH + H(+). It carries out the reaction glycerol + NADP(+) = D-glyceraldehyde + NADPH + H(+). The enzyme catalyses glycerol + NADP(+) = L-glyceraldehyde + NADPH + H(+). It catalyses the reaction hydroxyacetone + NADP(+) = methylglyoxal + NADPH + H(+). The catalysed reaction is 3-deoxyfructose + NADP(+) = 3-deoxyglucosone + NADPH + H(+). It carries out the reaction (R)-mevalonate + NADP(+) = (R)-mevaldate + NADPH + H(+). The enzyme catalyses S-nitroso-CoA + NADPH + H(+) = sulfinamide-CoA + NADP(+). It catalyses the reaction S-nitrosoglutathione + NADPH + H(+) = S-(hydroxysulfenamide)glutathione + NADP(+). Catalyzes the NADPH-dependent reduction of a wide variety of carbonyl-containing compounds to their corresponding alcohols. Displays enzymatic activity towards endogenous metabolites such as aromatic and aliphatic aldehydes, ketones, monosaccharides and bile acids, with a preference for negatively charged substrates, such as glucuronate and succinic semialdehyde. Plays an important role by catalyzing the reduction of D-glucuronic acid and D-glucurono-gamma-lactone. Functions as a detoxifiying enzyme by reducing a range of toxic aldehydes. Reduces methylglyoxal and 3-deoxyglucosone, which are present at elevated levels under hyperglycemic conditions and are cytotoxic. Involved also in the detoxification of lipid-derived aldehydes like acrolein. Plays a role in the activation of procarcinogens, such as polycyclic aromatic hydrocarbon trans-dihydrodiols, and in the metabolism of various xenobiotics and drugs. Also acts as an inhibitor of protein S-nitrosylation by mediating degradation of S-nitroso-coenzyme A (S-nitroso-CoA), a cofactor required to S-nitrosylate proteins. S-nitroso-CoA reductase activity is involved in reprogramming intermediary metabolism in renal proximal tubules, notably by inhibiting protein S-nitrosylation of isoform 2 of PKM (PKM2). Also acts as a S-nitroso-glutathione reductase by catalyzing the NADPH-dependent reduction of S-nitrosoglutathione. Displays no reductase activity towards retinoids. In Cricetulus griseus (Chinese hamster), this protein is Aldo-keto reductase family 1 member A1 (AKR1A1).